The following is a 160-amino-acid chain: Cytochrome b6-f complex subunit 4 (160 aa).

A run of 3 helical transmembrane segments spans residues 36-56 (LLYIFPVVILGTIACNVGLAV), 95-115 (LLGVLLMVSVPTGLLTVPFLE), and 131-151 (TVFLIGTAVALWLGIGATLPI).

The protein belongs to the cytochrome b family. PetD subfamily. The 4 large subunits of the cytochrome b6-f complex are cytochrome b6, subunit IV (17 kDa polypeptide, petD), cytochrome f and the Rieske protein, while the 4 small subunits are petG, petL, petM and petN. The complex functions as a dimer.

The protein resides in the plastid. The protein localises to the chloroplast thylakoid membrane. Its function is as follows. Component of the cytochrome b6-f complex, which mediates electron transfer between photosystem II (PSII) and photosystem I (PSI), cyclic electron flow around PSI, and state transitions. The chain is Cytochrome b6-f complex subunit 4 from Saccharum hybrid (Sugarcane).